Here is a 308-residue protein sequence, read N- to C-terminus: MAKENLPIVFGPVLSRRFGKSLGVDLSPSKKQCNYNCIYCELGKAKPIERMEEVIKVETLISTIQNALNNLTTPIDVLTITANGEPTLYPHLLELIQSIKPFLKGVKTLILSNGSLFYEPKVQQALKEFDIVKFSLDAIDLKAFERVDKPYSKDINKILEGILSFSQIYQGQLVAEVLLIKGVNDSANNLKLIADFLKKINTARVDLSTIDRPSSFKAPKLSEDELLKCSLFFEGLCVSLPKRSTAQAKKLVSCGIDELLALISRRPLSAEEAPLILDPNAFKHLETLLNHKQITIKKVGSLEFYCAF.

A Radical SAM core domain is found at 18–247 (FGKSLGVDLS…VSLPKRSTAQ (230 aa)). Residues cysteine 33, cysteine 37, and cysteine 40 each contribute to the [4Fe-4S] cluster site.

It belongs to the UPF0026 family. [4Fe-4S] cluster is required as a cofactor.

This Helicobacter pylori (strain J99 / ATCC 700824) (Campylobacter pylori J99) protein is UPF0026 protein jhp_0109.